The primary structure comprises 89 residues: Acylphosphatase (89 aa).

An Acylphosphatase-like domain is found at 4–89; sequence SYIAHISGRV…WQEHHFFSIG (86 aa). Residues arginine 19 and asparagine 37 contribute to the active site.

This sequence belongs to the acylphosphatase family.

It carries out the reaction an acyl phosphate + H2O = a carboxylate + phosphate + H(+). The chain is Acylphosphatase (acyP) from Colwellia psychrerythraea (strain 34H / ATCC BAA-681) (Vibrio psychroerythus).